The primary structure comprises 103 residues: Large ribosomal subunit protein bL21 (103 aa).

The protein belongs to the bacterial ribosomal protein bL21 family. Part of the 50S ribosomal subunit. Contacts protein L20.

Its function is as follows. This protein binds to 23S rRNA in the presence of protein L20. The protein is Large ribosomal subunit protein bL21 of Polynucleobacter asymbioticus (strain DSM 18221 / CIP 109841 / QLW-P1DMWA-1) (Polynucleobacter necessarius subsp. asymbioticus).